Consider the following 348-residue polypeptide: Ion-translocating oxidoreductase complex subunit D (348 aa).

At 1–22 (MAFFIASSPHLRSKRSTADVMR) the chain is on the cytoplasmic side. A run of 2 helical transmembrane segments spans residues 23–43 (WVLVCALPGLIAQTYFFGYGT) and 44–64 (LIQLLLAISVAVALEAGIMLL). At 65–71 (RKRSPIS) the chain is on the cytoplasmic side. Residues 72-91 (ALRDYSAVVTAWLLAVAIPP) form a helical membrane-spanning segment. Residues 92–94 (LSP) are Periplasmic-facing. A helical membrane pass occupies residues 95–117 (WWVVVIGLIFAIVIAKHLYGGLG). Residues 118–125 (QNPFNPAM) are Cytoplasmic-facing. Residues 126-146 (IAYVVLLISFPVQMTSWMAPI) traverse the membrane as a helical segment. At 147 to 213 (KLTAEPSSLV…ETLTQPQFSG (67 aa)) the chain is on the periplasmic side. Threonine 187 bears the FMN phosphoryl threonine mark. Residues 214–234 (FAGIGWEWVNIAYLLGGLILL) traverse the membrane as a helical segment. Topologically, residues 235–242 (KLRIIRWH) are cytoplasmic. The helical transmembrane segment at 243-263 (IPVAMLAGLVFTALLAQLFAP) threads the bilayer. At 264–265 (GT) the chain is on the periplasmic side. A helical membrane pass occupies residues 266–286 (TASPMIHLLSGATMLGAFFIA). The Cytoplasmic portion of the chain corresponds to 287–299 (TDPVSASTTDKGR). The next 2 helical transmembrane spans lie at 300–320 (LIYGFFIGAMVFLIRSWGGFP) and 321–341 (DGVAFAVLLANMCVPLIDYYT). Topologically, residues 342–348 (KPRTYGH) are cytoplasmic.

It belongs to the NqrB/RnfD family. As to quaternary structure, the complex is composed of six subunits: RnfA, RnfB, RnfC, RnfD, RnfE and RnfG. The cofactor is FMN.

Its subcellular location is the cell inner membrane. Functionally, part of a membrane-bound complex that couples electron transfer with translocation of ions across the membrane. This chain is Ion-translocating oxidoreductase complex subunit D, found in Vibrio cholerae serotype O1 (strain ATCC 39541 / Classical Ogawa 395 / O395).